Reading from the N-terminus, the 178-residue chain is Peptide deformylase (178 aa).

Cys-96 and His-138 together coordinate Fe cation. Residue Glu-139 is part of the active site. Fe cation is bound at residue His-142.

Belongs to the polypeptide deformylase family. Fe(2+) serves as cofactor.

It carries out the reaction N-terminal N-formyl-L-methionyl-[peptide] + H2O = N-terminal L-methionyl-[peptide] + formate. Its function is as follows. Removes the formyl group from the N-terminal Met of newly synthesized proteins. Requires at least a dipeptide for an efficient rate of reaction. N-terminal L-methionine is a prerequisite for activity but the enzyme has broad specificity at other positions. In Bartonella tribocorum (strain CIP 105476 / IBS 506), this protein is Peptide deformylase.